A 210-amino-acid polypeptide reads, in one-letter code: Putative 3-methyladenine DNA glycosylase (210 aa).

Belongs to the DNA glycosylase MPG family.

This Lactobacillus acidophilus (strain ATCC 700396 / NCK56 / N2 / NCFM) protein is Putative 3-methyladenine DNA glycosylase.